The primary structure comprises 572 residues: Proline--tRNA ligase (572 aa).

It belongs to the class-II aminoacyl-tRNA synthetase family. ProS type 1 subfamily. Homodimer.

It localises to the cytoplasm. It carries out the reaction tRNA(Pro) + L-proline + ATP = L-prolyl-tRNA(Pro) + AMP + diphosphate. Catalyzes the attachment of proline to tRNA(Pro) in a two-step reaction: proline is first activated by ATP to form Pro-AMP and then transferred to the acceptor end of tRNA(Pro). As ProRS can inadvertently accommodate and process non-cognate amino acids such as alanine and cysteine, to avoid such errors it has two additional distinct editing activities against alanine. One activity is designated as 'pretransfer' editing and involves the tRNA(Pro)-independent hydrolysis of activated Ala-AMP. The other activity is designated 'posttransfer' editing and involves deacylation of mischarged Ala-tRNA(Pro). The misacylated Cys-tRNA(Pro) is not edited by ProRS. This Caldicellulosiruptor saccharolyticus (strain ATCC 43494 / DSM 8903 / Tp8T 6331) protein is Proline--tRNA ligase.